The following is a 282-amino-acid chain: 2-dehydro-3-deoxyphosphooctonate aldolase (282 aa).

It belongs to the KdsA family.

The protein resides in the cytoplasm. It catalyses the reaction D-arabinose 5-phosphate + phosphoenolpyruvate + H2O = 3-deoxy-alpha-D-manno-2-octulosonate-8-phosphate + phosphate. The protein operates within carbohydrate biosynthesis; 3-deoxy-D-manno-octulosonate biosynthesis; 3-deoxy-D-manno-octulosonate from D-ribulose 5-phosphate: step 2/3. Its pathway is bacterial outer membrane biogenesis; lipopolysaccharide biosynthesis. The protein is 2-dehydro-3-deoxyphosphooctonate aldolase of Shewanella oneidensis (strain ATCC 700550 / JCM 31522 / CIP 106686 / LMG 19005 / NCIMB 14063 / MR-1).